Reading from the N-terminus, the 398-residue chain is Putative transposase y4qJ (398 aa).

Belongs to the transposase 32 family.

This Sinorhizobium fredii (strain NBRC 101917 / NGR234) protein is Putative transposase y4qJ.